We begin with the raw amino-acid sequence, 511 residues long: 2-isopropylmalate synthase (511 aa).

The Pyruvate carboxyltransferase domain occupies 4–266; that stretch reads IRIFDTTLRD…ETGIDLSQLY (263 aa). Mn(2+)-binding residues include Asp-13, His-201, His-203, and Asn-237. The regulatory domain stretch occupies residues 391–511; it reads VLEKIRVVSG…IAANARAQKN (121 aa).

The protein belongs to the alpha-IPM synthase/homocitrate synthase family. LeuA type 1 subfamily. As to quaternary structure, homodimer. It depends on Mn(2+) as a cofactor.

It localises to the cytoplasm. It catalyses the reaction 3-methyl-2-oxobutanoate + acetyl-CoA + H2O = (2S)-2-isopropylmalate + CoA + H(+). It functions in the pathway amino-acid biosynthesis; L-leucine biosynthesis; L-leucine from 3-methyl-2-oxobutanoate: step 1/4. Functionally, catalyzes the condensation of the acetyl group of acetyl-CoA with 3-methyl-2-oxobutanoate (2-ketoisovalerate) to form 3-carboxy-3-hydroxy-4-methylpentanoate (2-isopropylmalate). This chain is 2-isopropylmalate synthase, found in Acetivibrio thermocellus (strain ATCC 27405 / DSM 1237 / JCM 9322 / NBRC 103400 / NCIMB 10682 / NRRL B-4536 / VPI 7372) (Clostridium thermocellum).